A 189-amino-acid polypeptide reads, in one-letter code: Protein Flattop (189 aa).

Residues 112-189 (EISGKPFDPD…PPPSPCKSTK (78 aa)) form a disordered region. Residues 137 to 148 (APNPTIIPSSPV) are compositionally biased toward polar residues. The span at 178 to 189 (NNPPPSPCKSTK) shows a compositional bias: pro residues.

Belongs to the Flattop family. As to quaternary structure, microtubule inner protein component of sperm flagellar doublet microtubules. Interacts with DLG3. In terms of tissue distribution, expressed in mono- and multiciliated tissues during planar cell polarity acquisition.

The protein localises to the cytoplasm. Its subcellular location is the cytoskeleton. It is found in the cilium basal body. It localises to the cilium axoneme. The protein resides in the flagellum axoneme. The protein localises to the apical cell membrane. Its function is as follows. Microtubule inner protein (MIP) part of the dynein-decorated doublet microtubules (DMTs) in cilia axoneme. Acts as a regulator of cilium basal body docking and positioning in mono- and multiciliated cells. Regulates basal body docking and cilia formation in multiciliated lung cells. Regulates kinocilium positioning and stereocilia bundle morphogenesis in the inner ear. This is Protein Flattop from Mus musculus (Mouse).